We begin with the raw amino-acid sequence, 431 residues long: Adenylosuccinate synthetase (431 aa).

Residues 13–19 (GDEGKGK) and 41–43 (GHT) contribute to the GTP site. Aspartate 14 acts as the Proton acceptor in catalysis. Positions 14 and 41 each coordinate Mg(2+). Residues 14-17 (DEGK), 39-42 (NAGH), threonine 130, arginine 144, glutamine 225, threonine 240, and arginine 304 each bind IMP. The active-site Proton donor is the histidine 42. 300-306 (ATTGRKR) contributes to the substrate binding site. Residues arginine 306, 332 to 334 (KLD), and 415 to 417 (STG) each bind GTP.

This sequence belongs to the adenylosuccinate synthetase family. As to quaternary structure, homodimer. Mg(2+) is required as a cofactor.

It is found in the cytoplasm. The enzyme catalyses IMP + L-aspartate + GTP = N(6)-(1,2-dicarboxyethyl)-AMP + GDP + phosphate + 2 H(+). Its pathway is purine metabolism; AMP biosynthesis via de novo pathway; AMP from IMP: step 1/2. Plays an important role in the de novo pathway of purine nucleotide biosynthesis. Catalyzes the first committed step in the biosynthesis of AMP from IMP. This chain is Adenylosuccinate synthetase, found in Shewanella halifaxensis (strain HAW-EB4).